We begin with the raw amino-acid sequence, 228 residues long: Ribose-5-phosphate isomerase A (228 aa).

Substrate-binding positions include 29-32, 85-88, and 98-101; these read TGST, DGAD, and KGGG. Glu-107 functions as the Proton acceptor in the catalytic mechanism. Lys-125 contributes to the substrate binding site.

It belongs to the ribose 5-phosphate isomerase family. As to quaternary structure, homodimer.

It carries out the reaction aldehydo-D-ribose 5-phosphate = D-ribulose 5-phosphate. Its pathway is carbohydrate degradation; pentose phosphate pathway; D-ribose 5-phosphate from D-ribulose 5-phosphate (non-oxidative stage): step 1/1. In terms of biological role, catalyzes the reversible conversion of ribose-5-phosphate to ribulose 5-phosphate. The polypeptide is Ribose-5-phosphate isomerase A (Staphylococcus aureus (strain COL)).